The following is a 289-amino-acid chain: Rhodopsin (289 aa).

Over 1-7 the chain is Extracellular; it reads YLVNPAA. The chain crosses the membrane as a helical span at residues 8–32; sequence YAALGAYMFLLILIGFPVNFLTLYV. The Cytoplasmic portion of the chain corresponds to 33-44; the sequence is TIEHKKLRTPLN. A helical transmembrane segment spans residues 45–67; that stretch reads YILLNLAVANLFMVLGGFTTTMY. The Extracellular segment spans residues 68–81; the sequence is TSMHGYFVLGRLGC. C81 and C158 are oxidised to a cystine. A helical membrane pass occupies residues 82-104; that stretch reads NLEGFFATMGGEIALWSLVVLAI. A 'Ionic lock' involved in activated form stabilization motif is present at residues 105–107; the sequence is ERW. Over 105–123 the chain is Cytoplasmic; it reads ERWIVVCKPISNFRFTEDH. Residues 124 to 144 traverse the membrane as a helical segment; sequence AIMGLAFTWVMALSCAVPPLV. The Extracellular portion of the chain corresponds to 145-173; sequence GWSRYIPEGMQCSCGVDYYTRAEGFNNES. An N-linked (GlcNAc...) asparagine glycan is attached at N171. A helical transmembrane segment spans residues 174–195; that stretch reads FVIYMFIVHFLTPLIIISFCYG. At 196–223 the chain is on the cytoplasmic side; sequence RLLCAVKEAAAAQQESETTQRAEREVSR. A helical membrane pass occupies residues 224–245; sequence MVVMMVISFLMCWLPYASVAWY. At 246–257 the chain is on the extracellular side; it reads IFCNQGSEFGPI. Residues 258–279 traverse the membrane as a helical segment; that stretch reads FMTLPAFFAKSSAIYNPLIYIC. K267 carries the N6-(retinylidene)lysine modification. Residues 280–289 are Cytoplasmic-facing; that stretch reads MNKQFRHCMI.

The protein belongs to the G-protein coupled receptor 1 family. Opsin subfamily. In terms of processing, phosphorylated on some or all of the serine and threonine residues present in the C-terminal region. Post-translationally, contains one covalently linked retinal chromophore.

Its subcellular location is the membrane. The protein resides in the cell projection. It localises to the cilium. The protein localises to the photoreceptor outer segment. In terms of biological role, photoreceptor required for image-forming vision at low light intensity. While most salt water fish species use retinal as chromophore, most freshwater fish use 3-dehydroretinal, or a mixture of retinal and 3-dehydroretinal. Light-induced isomerization of 11-cis to all-trans retinal triggers a conformational change that activates signaling via G-proteins. Subsequent receptor phosphorylation mediates displacement of the bound G-protein alpha subunit by arrestin and terminates signaling. The sequence is that of Rhodopsin (rho) from Cottocomephorus inermis (Longfin Baikal sculpin).